Consider the following 490-residue polypeptide: Betaine aldehyde dehydrogenase (490 aa).

Residues Ile27 and Asp93 each coordinate K(+). NAD(+) is bound at residue Gly150 to Trp152. Catalysis depends on Lys162, which acts as the Charge relay system. Position 176 to 179 (Lys176 to Glu179) interacts with NAD(+). Val180 serves as a coordination point for K(+). Gly230–Thr233 is an NAD(+) binding site. Leu246 is a K(+) binding site. The Proton acceptor role is filled by Glu252. 3 residues coordinate NAD(+): Gly254, Cys286, and Glu387. Cys286 acts as the Nucleophile in catalysis. Residue Cys286 is modified to Cysteine sulfenic acid (-SOH). K(+)-binding residues include Lys457 and Gly460. The active-site Charge relay system is the Glu464.

It belongs to the aldehyde dehydrogenase family. Dimer of dimers. The cofactor is K(+).

The enzyme catalyses betaine aldehyde + NAD(+) + H2O = glycine betaine + NADH + 2 H(+). It participates in amine and polyamine biosynthesis; betaine biosynthesis via choline pathway; betaine from betaine aldehyde: step 1/1. Its function is as follows. Involved in the biosynthesis of the osmoprotectant glycine betaine. Catalyzes the irreversible oxidation of betaine aldehyde to the corresponding acid. The sequence is that of Betaine aldehyde dehydrogenase from Pseudomonas putida (strain ATCC 700007 / DSM 6899 / JCM 31910 / BCRC 17059 / LMG 24140 / F1).